The sequence spans 262 residues: Adenosylcobinamide-GDP ribazoletransferase (262 aa).

The next 5 helical transmembrane spans lie at 41 to 61 (AFPL…FILG), 65 to 85 (ASSL…TGAL), 115 to 132 (IGTY…LRVS), 134 to 156 (LAAF…TAAL), and 195 to 215 (GVLL…AVWL).

It belongs to the CobS family. It depends on Mg(2+) as a cofactor.

The protein localises to the cell inner membrane. The catalysed reaction is alpha-ribazole + adenosylcob(III)inamide-GDP = adenosylcob(III)alamin + GMP + H(+). It carries out the reaction alpha-ribazole 5'-phosphate + adenosylcob(III)inamide-GDP = adenosylcob(III)alamin 5'-phosphate + GMP + H(+). The protein operates within cofactor biosynthesis; adenosylcobalamin biosynthesis; adenosylcobalamin from cob(II)yrinate a,c-diamide: step 7/7. Functionally, joins adenosylcobinamide-GDP and alpha-ribazole to generate adenosylcobalamin (Ado-cobalamin). Also synthesizes adenosylcobalamin 5'-phosphate from adenosylcobinamide-GDP and alpha-ribazole 5'-phosphate. This is Adenosylcobinamide-GDP ribazoletransferase from Rhizobium meliloti (strain 1021) (Ensifer meliloti).